The primary structure comprises 389 residues: 5-hydroxytryptamine receptor 1B (389 aa).

Residues 1–27 (MEETNTHCAPPPPAGSQTGVSQANLSS) form a disordered region. The Extracellular segment spans residues 1–45 (MEETNTHCAPPPPAGSQTGVSQANLSSAPPNCSTEGYIYQDSIAL). Over residues 15 to 27 (GSQTGVSQANLSS) the composition is skewed to polar residues. Asn24 and Asn31 each carry an N-linked (GlcNAc...) asparagine glycan. Residues 46-71 (PWKVLLILVLALFTLATTLSNAFVIA) traverse the membrane as a helical segment. Residues 72–85 (TVYRTRKLHTPANY) lie on the Cytoplasmic side of the membrane. The chain crosses the membrane as a helical span at residues 86-110 (LIASLAVTDLLVSILVMPISTMYTV). At 111-118 (TGRWTLGQ) the chain is on the extracellular side. The chain crosses the membrane as a helical span at residues 119 to 144 (VVCDFWLSSDITCCTASILHLCVIAL). A disulfide bridge links Cys121 with Cys198. Ergotamine-binding residues include Asp128 and Thr133. The DRY motif; important for ligand-induced conformation changes and signaling signature appears at 145-147 (DRY). Residues 145 to 164 (DRYWAITDAVEYSAKRTPKR) are Cytoplasmic-facing. A helical membrane pass occupies residues 165–183 (AAVMIALVWVFSISISLPP). Residues 184 to 204 (FFWRQAKAEEEVSDCRVNTDH) lie on the Extracellular side of the membrane. Position 200 (Val200) interacts with ergotamine. A helical transmembrane segment spans residues 205–228 (MLYTVYSTVGAFYFPTLLLIALYG). Topologically, residues 229-314 (RIYVEARSRI…AARERKATKT (86 aa)) are cytoplasmic. The segment covering 258-271 (DSPGSTSSVTSVNS) has biased composition (polar residues). A disordered region spans residues 258 to 281 (DSPGSTSSVTSVNSRAPDVPSESG). A helical transmembrane segment spans residues 315–336 (LGIILGAFIVCWLPFFIISLVM). Topologically, residues 337-346 (PICKDACWFH) are extracellular. A helical membrane pass occupies residues 347–369 (LAIFDFFTWLGYLNSLINPIIYT). Positions 364–368 (NPIIY) match the NPxxY motif; important for ligand-induced conformation changes and signaling motif. The Cytoplasmic segment spans residues 370-389 (MSNEDFKQAFHKLIRFKCTG). A lipid anchor (S-palmitoyl cysteine) is attached at Cys387.

This sequence belongs to the G-protein coupled receptor 1 family. As to quaternary structure, homodimer. Heterodimer with HTR1D. Post-translationally, phosphorylated. Desensitization of the receptor may be mediated by its phosphorylation. In terms of processing, palmitoylated.

Its subcellular location is the cell membrane. Its function is as follows. G-protein coupled receptor for 5-hydroxytryptamine (serotonin). Also functions as a receptor for ergot alkaloid derivatives, various anxiolytic and antidepressant drugs and other psychoactive substances, such as lysergic acid diethylamide (LSD). Ligand binding causes a conformation change that triggers signaling via guanine nucleotide-binding proteins (G proteins) and modulates the activity of downstream effectors, such as adenylate cyclase. HTR1B is coupled to G(i)/G(o) G alpha proteins and mediates inhibitory neurotransmission by inhibiting adenylate cyclase activity. Arrestin family members inhibit signaling via G proteins and mediate activation of alternative signaling pathways. Regulates the release of 5-hydroxytryptamine, dopamine and acetylcholine in the brain, and thereby affects neural activity, nociceptive processing, pain perception, mood and behavior. Besides, plays a role in vasoconstriction of cerebral arteries. The protein is 5-hydroxytryptamine receptor 1B (HTR1B) of Felis catus (Cat).